Here is a 204-residue protein sequence, read N- to C-terminus: B9 domain-containing protein 1 (204 aa).

A C2 B9-type domain is found at 9–127; it reads FLLMITGQVE…TIPMFVPEST (119 aa).

Belongs to the B9D family. Part of the tectonic-like complex (also named B9 complex).

The protein localises to the cytoplasm. It localises to the cytoskeleton. Its subcellular location is the cilium basal body. Functionally, component of the tectonic-like complex, a complex localized at the transition zone of primary cilia and acting as a barrier that prevents diffusion of transmembrane proteins between the cilia and plasma membranes. Required for ciliogenesis and sonic hedgehog/SHH signaling. The polypeptide is B9 domain-containing protein 1 (B9d1) (Mus musculus (Mouse)).